The primary structure comprises 425 residues: MRVKLCGAAGGRLGTLAGLGRSGAAALALPGCLLYTRTGTAPHLTLDTLREVSGVPPVAQLTLPAMAELHDVLAEYKEGAAKFIGMPDTVLYCSLQDPVAPCPSGYNTNKTVSLWSSSGRMEMTASKFMDIQRAIQPDWFQCIADGDTISGEVTRKRAKKSVDRSLSFLDACLQLLEKTPELQGSVMFGTIEGGDVLEERLRSARETAKRPVGGFLLDGFQGRAMAKETKMNLISSVTAELPEDKPRIIHGVGKPDEVLECIERGVDIFESFFPFQVTERGCALVFGYDYLSDPKAEAALKQNGAQDLEKNSPEEDQEEEVVKADPEMTPFEIFLKEKRYHDDFRPLLEGCTCYCCQRHTRAYLHHLLVSSELLAGVLLMMHNFQHYFSFFSAIRDALRDDKLDQLKKLIFRQALQGPENAKIDQ.

The tract at residues glutamine 302 to lysine 323 is disordered. Residues cysteine 351, cysteine 353, cysteine 356, and histidine 382 each coordinate Zn(2+).

It belongs to the queuine tRNA-ribosyltransferase family. QTRT2 subfamily. Heterodimer of a catalytic subunit QTRT1 and an accessory subunit QTRT2. Requires Zn(2+) as cofactor.

It localises to the cytoplasm. Its subcellular location is the mitochondrion outer membrane. In terms of biological role, non-catalytic subunit of the queuine tRNA-ribosyltransferase (TGT) that catalyzes the base-exchange of a guanine (G) residue with queuine (Q) at position 34 (anticodon wobble position) in tRNAs with GU(N) anticodons (tRNA-Asp, -Asn, -His and -Tyr), resulting in the hypermodified nucleoside queuosine (7-(((4,5-cis-dihydroxy-2-cyclopenten-1-yl)amino)methyl)-7-deazaguanosine). This is Queuine tRNA-ribosyltransferase accessory subunit 2 from Gallus gallus (Chicken).